An 82-amino-acid chain; its full sequence is Large ribosomal subunit protein bL31 (82 aa).

C16, C18, C37, and C40 together coordinate Zn(2+).

The protein belongs to the bacterial ribosomal protein bL31 family. Type A subfamily. In terms of assembly, part of the 50S ribosomal subunit. The cofactor is Zn(2+).

Binds the 23S rRNA. This chain is Large ribosomal subunit protein bL31, found in Blochmanniella pennsylvanica (strain BPEN).